The primary structure comprises 162 residues: Ribosome maturation factor RimP (162 aa).

The protein belongs to the RimP family.

The protein resides in the cytoplasm. Required for maturation of 30S ribosomal subunits. The protein is Ribosome maturation factor RimP of Leptospira biflexa serovar Patoc (strain Patoc 1 / Ames).